We begin with the raw amino-acid sequence, 430 residues long: 3-phosphoshikimate 1-carboxyvinyltransferase (430 aa).

Residues K25, S26, and R30 each contribute to the 3-phosphoshikimate site. K25 serves as a coordination point for phosphoenolpyruvate. The phosphoenolpyruvate site is built by G98 and R126. 3-phosphoshikimate-binding residues include S169, S170, Q171, S198, E313, and H342. Q171 lines the phosphoenolpyruvate pocket. E313 acts as the Proton acceptor in catalysis. Phosphoenolpyruvate-binding residues include R346, R387, and K412.

This sequence belongs to the EPSP synthase family. In terms of assembly, monomer.

It localises to the cytoplasm. It carries out the reaction 3-phosphoshikimate + phosphoenolpyruvate = 5-O-(1-carboxyvinyl)-3-phosphoshikimate + phosphate. It functions in the pathway metabolic intermediate biosynthesis; chorismate biosynthesis; chorismate from D-erythrose 4-phosphate and phosphoenolpyruvate: step 6/7. In terms of biological role, catalyzes the transfer of the enolpyruvyl moiety of phosphoenolpyruvate (PEP) to the 5-hydroxyl of shikimate-3-phosphate (S3P) to produce enolpyruvyl shikimate-3-phosphate and inorganic phosphate. The polypeptide is 3-phosphoshikimate 1-carboxyvinyltransferase (Mycobacterium leprae (strain TN)).